A 1059-amino-acid chain; its full sequence is Kinesin-like protein KIN-7K, chloroplastic (1059 aa).

2 stretches are compositionally biased toward low complexity: residues 1-35 (MSSRPSSSASSRRSSSPFSAGSRRPPTSSSSSAGS) and 43-58 (PRSYSTASSVSSSSHF). A chloroplast-targeting transit peptide spans 1–48 (MSSRPSSSASSRRSSSPFSAGSRRPPTSSSSSAGSYLTGRLMPRSYST). The disordered stretch occupies residues 1 to 99 (MSSRPSSSAS…SPPSPVPFPS (99 aa)). The segment covering 59–69 (FGGGGGSGGGS) has biased composition (gly residues). Over residues 70 to 87 (RSTTPGRRGSSSSSLVGP) the composition is skewed to low complexity. Positions 88–97 (VPSPPSPVPF) are enriched in pro residues. The Kinesin motor domain occupies 114–431 (SISVTIRFRP…LKFASRAKRV (318 aa)). 194-201 (GVTSSGKT) lines the ATP pocket. Residues 435 to 518 (AARNRMIDEK…IQRLTKLILV (84 aa)) adopt a coiled-coil conformation. The tract at residues 526 to 570 (ALTDTSSHQRHNSVNEEDKVSTSQDSSMLVQNDSATKDSLSSASP) is disordered. Residues 546-569 (STSQDSSMLVQNDSATKDSLSSAS) are compositionally biased toward polar residues. Coiled coils occupy residues 640–674 (EGTKNQIDNLEREIREKRRHMRALEQKLMESGEAS), 700–781 (ELEL…EENR), and 862–910 (LEDM…LEND). The RING-type zinc-finger motif lies at 1013 to 1048 (CKVCFESATAAVLLPCRHFCLCKPCSLACSECPLCR).

The protein belongs to the TRAFAC class myosin-kinesin ATPase superfamily. Kinesin family. KIN-7 subfamily.

The protein resides in the plastid. Its subcellular location is the chloroplast. This Oryza sativa subsp. japonica (Rice) protein is Kinesin-like protein KIN-7K, chloroplastic.